A 256-amino-acid polypeptide reads, in one-letter code: Myb family transcription factor MPH1 (256 aa).

One can recognise an HTH myb-type domain in the interval 14-74 (RSEVPRMRWT…HLQMYRSGSS (61 aa)). The H-T-H motif DNA-binding region spans 45–70 (PKRILQLMGVKGVSISHIKSHLQMYR).

As to expression, highly expressed in the pulvinus and stem nodes. Expressed in the plumule of germinating seeds, coleoptile, leaves, internodes, leave sheaths, spikes and roots.

Its subcellular location is the nucleus. In terms of biological role, probable transcription factor involved in the regulation of plant height by elongating internode cell length. Involved in the positive regulation of grain yield. May be involved in the regulation of genes related to cell elongation and cell wall synthesis, which are associated with plant height and yield phenotypes. Plays a role in tolerance to cadmium stress. The protein is Myb family transcription factor MPH1 of Oryza sativa subsp. japonica (Rice).